Consider the following 186-residue polypeptide: Phosphopantetheine adenylyltransferase (186 aa).

T14 lines the substrate pocket. ATP contacts are provided by residues 14–15 and H22; that span reads TF. Substrate contacts are provided by K46, L78, and R92. Residues 93 to 95, E103, and 128 to 134 contribute to the ATP site; these read GLR and WLYISST.

This sequence belongs to the bacterial CoaD family. In terms of assembly, homohexamer. Mg(2+) is required as a cofactor.

It is found in the cytoplasm. The enzyme catalyses (R)-4'-phosphopantetheine + ATP + H(+) = 3'-dephospho-CoA + diphosphate. Its pathway is cofactor biosynthesis; coenzyme A biosynthesis; CoA from (R)-pantothenate: step 4/5. Reversibly transfers an adenylyl group from ATP to 4'-phosphopantetheine, yielding dephospho-CoA (dPCoA) and pyrophosphate. The sequence is that of Phosphopantetheine adenylyltransferase from Nitratidesulfovibrio vulgaris (strain ATCC 29579 / DSM 644 / CCUG 34227 / NCIMB 8303 / VKM B-1760 / Hildenborough) (Desulfovibrio vulgaris).